The sequence spans 163 residues: MSTADRYRKVFPVTWEQLHRDAKALSWRLLEKGPYKGIIAIARGGLVPAAVIARELDIHLVETICISSYQWQEQTSSHKVLKTVEGRGEGWLIIDDLADTGGTARLVREMLPEAHFATVYAKPAGRPLVDTFITEVSQDTWILFPWDSEVQYVVPLVNQPQQS.

5-phospho-alpha-D-ribose 1-diphosphate contacts are provided by residues 43–44 and 95–103; these read RG and DDLADTGGT. Mg(2+) is bound at residue D96. 2 residues coordinate guanine: D99 and I142. Xanthine-binding residues include D99 and I142. GMP-binding positions include 99–103 and 141–142; these read DTGGT and WI.

Belongs to the purine/pyrimidine phosphoribosyltransferase family. XGPT subfamily. In terms of assembly, homotetramer. Mg(2+) serves as cofactor.

It localises to the cell inner membrane. It carries out the reaction GMP + diphosphate = guanine + 5-phospho-alpha-D-ribose 1-diphosphate. The catalysed reaction is XMP + diphosphate = xanthine + 5-phospho-alpha-D-ribose 1-diphosphate. The enzyme catalyses IMP + diphosphate = hypoxanthine + 5-phospho-alpha-D-ribose 1-diphosphate. It functions in the pathway purine metabolism; GMP biosynthesis via salvage pathway; GMP from guanine: step 1/1. It participates in purine metabolism; XMP biosynthesis via salvage pathway; XMP from xanthine: step 1/1. Purine salvage pathway enzyme that catalyzes the transfer of the ribosyl-5-phosphate group from 5-phospho-alpha-D-ribose 1-diphosphate (PRPP) to the N9 position of the 6-oxopurines guanine and xanthine to form the corresponding ribonucleotides GMP (guanosine 5'-monophosphate) and XMP (xanthosine 5'-monophosphate), with the release of PPi. To a lesser extent, also acts on hypoxanthine. This chain is Xanthine-guanine phosphoribosyltransferase, found in Nitratidesulfovibrio vulgaris (strain ATCC 29579 / DSM 644 / CCUG 34227 / NCIMB 8303 / VKM B-1760 / Hildenborough) (Desulfovibrio vulgaris).